Here is a 473-residue protein sequence, read N- to C-terminus: Photosystem II CP43 reaction center protein (473 aa).

A propeptide spanning residues 1–14 (MKTLYSLRRSYPVE) is cleaved from the precursor. At T15 the chain carries N-acetylthreonine. T15 carries the post-translational modification Phosphothreonine. The next 5 membrane-spanning stretches (helical) occupy residues 69-93 (LFEV…PHLA), 134-155 (LIGP…KDRN), 178-200 (KALY…RKIT), 255-275 (KPFA…LSYS), and 291-312 (WFNN…ASQA). E367 serves as a coordination point for [CaMn4O5] cluster. The helical transmembrane segment at 447–471 (RARAAAAGFEKGIDRDFEPVLSMTP) threads the bilayer.

This sequence belongs to the PsbB/PsbC family. PsbC subfamily. As to quaternary structure, PSII is composed of 1 copy each of membrane proteins PsbA, PsbB, PsbC, PsbD, PsbE, PsbF, PsbH, PsbI, PsbJ, PsbK, PsbL, PsbM, PsbT, PsbX, PsbY, PsbZ, Psb30/Ycf12, at least 3 peripheral proteins of the oxygen-evolving complex and a large number of cofactors. It forms dimeric complexes. The cofactor is Binds multiple chlorophylls and provides some of the ligands for the Ca-4Mn-5O cluster of the oxygen-evolving complex. It may also provide a ligand for a Cl- that is required for oxygen evolution. PSII binds additional chlorophylls, carotenoids and specific lipids..

It is found in the plastid. It localises to the chloroplast thylakoid membrane. One of the components of the core complex of photosystem II (PSII). It binds chlorophyll and helps catalyze the primary light-induced photochemical processes of PSII. PSII is a light-driven water:plastoquinone oxidoreductase, using light energy to abstract electrons from H(2)O, generating O(2) and a proton gradient subsequently used for ATP formation. The chain is Photosystem II CP43 reaction center protein from Pinus thunbergii (Japanese black pine).